An 82-amino-acid polypeptide reads, in one-letter code: Vejovine (82 aa).

A signal peptide spans 1-22; it reads MNAKTLFVVFLIGMLVTEQVEA. Residues 70–82 constitute a propeptide that is removed on maturation; the sequence is MTLDEIVDAMYYD.

This sequence belongs to the non-disulfide-bridged peptide (NDBP) superfamily. Long chain multifunctional peptide (group 2) family. In terms of tissue distribution, expressed by the venom gland.

The protein resides in the secreted. It is found in the target cell membrane. Functionally, displays significant potent antimicrobial activity against clinical isolates of Gram-negative multidrug resistant strains of E.coli, P.aeruginosa and A.baumanii with MIC values as low as 4.4 uM. Additionally, it displays low cytolytic and hemolytic activity against human erythrocytes reaching 50% hemolysis at 100 uM. This is Vejovine from Vaejovis mexicanus (Mexican scorpion).